The sequence spans 1026 residues: Multidrug resistance protein MdtC (1026 aa).

The Cytoplasmic portion of the chain corresponds to 1–6; sequence MRFFAL. The chain crosses the membrane as a helical span at residues 7–29; the sequence is FIYRPVATILIAAAITLCGILGF. The Periplasmic segment spans residues 30–335; sequence RLLPVAPLPQ…TIRASLQEVE (306 aa). A helical membrane pass occupies residues 336 to 353; sequence ETLAISVALVILVVFLFL. The Cytoplasmic segment spans residues 354–359; that stretch reads RSGRAT. The chain crosses the membrane as a helical span at residues 360 to 379; that stretch reads LIPAVAVPVSLIGTFAAMYL. Residues 380–388 lie on the Periplasmic side of the membrane; the sequence is CGFSLNNLS. The helical transmembrane segment at 389-411 threads the bilayer; it reads LMALTIATGFVVDDAIVVLENIA. The Cytoplasmic portion of the chain corresponds to 412–430; the sequence is RHLEAGMKPLQAALQGTRE. Residues 431–453 form a helical membrane-spanning segment; that stretch reads VGFTVISMSLSLVAVFLPLLLMG. Over 454 to 467 the chain is Periplasmic; sequence GLPGRLLREFAVTL. The chain crosses the membrane as a helical span at residues 468-490; the sequence is SVAIGISLVVSLTLTPMMCGWML. The Cytoplasmic segment spans residues 491–852; sequence KSSKPRTQPR…QVFQQTMNSQ (362 aa). A helical membrane pass occupies residues 853 to 875; the sequence is LILIVAAIATVYIVLGILYESYV. Residues 876–894 lie on the Periplasmic side of the membrane; sequence HPLTILSTLPSAGVGALLA. A helical transmembrane segment spans residues 895–917; that stretch reads LELFNAPFSLIALIGIMLLIGIV. The Cytoplasmic segment spans residues 918 to 947; sequence KKNAIMMVDFALEAQRSGGLTPEQAIFQAC. A helical membrane pass occupies residues 948 to 970; it reads LLRFRPIMMTTLAALFGALPLVL. The Periplasmic portion of the chain corresponds to 971–984; sequence SGGDGSELRQPLGI. A helical membrane pass occupies residues 985–1007; that stretch reads TIVGGLVMSQLLTLYTTPVVYLF. Residues 1008–1026 are Cytoplasmic-facing; the sequence is FDRLRLRFSRKNSKPVVEI.

This sequence belongs to the resistance-nodulation-cell division (RND) (TC 2.A.6) family. MdtC subfamily. As to quaternary structure, part of a tripartite efflux system composed of MdtA, MdtB and MdtC. MdtC forms a heteromultimer with MdtB.

It localises to the cell inner membrane. In Salmonella typhimurium (strain LT2 / SGSC1412 / ATCC 700720), this protein is Multidrug resistance protein MdtC.